We begin with the raw amino-acid sequence, 449 residues long: Probable glycine dehydrogenase (decarboxylating) subunit 1 (449 aa).

It belongs to the GcvP family. N-terminal subunit subfamily. In terms of assembly, the glycine cleavage system is composed of four proteins: P, T, L and H. In this organism, the P 'protein' is a heterodimer of two subunits.

It carries out the reaction N(6)-[(R)-lipoyl]-L-lysyl-[glycine-cleavage complex H protein] + glycine + H(+) = N(6)-[(R)-S(8)-aminomethyldihydrolipoyl]-L-lysyl-[glycine-cleavage complex H protein] + CO2. Functionally, the glycine cleavage system catalyzes the degradation of glycine. The P protein binds the alpha-amino group of glycine through its pyridoxal phosphate cofactor; CO(2) is released and the remaining methylamine moiety is then transferred to the lipoamide cofactor of the H protein. The chain is Probable glycine dehydrogenase (decarboxylating) subunit 1 from Solibacter usitatus (strain Ellin6076).